The primary structure comprises 159 residues: Ribosomal RNA large subunit methyltransferase H (159 aa).

Residues leucine 76, glycine 108, and 127–132 contribute to the S-adenosyl-L-methionine site; that span reads FGKLTM.

It belongs to the RNA methyltransferase RlmH family. Homodimer.

The protein localises to the cytoplasm. It carries out the reaction pseudouridine(1915) in 23S rRNA + S-adenosyl-L-methionine = N(3)-methylpseudouridine(1915) in 23S rRNA + S-adenosyl-L-homocysteine + H(+). Its function is as follows. Specifically methylates the pseudouridine at position 1915 (m3Psi1915) in 23S rRNA. The chain is Ribosomal RNA large subunit methyltransferase H from Lacticaseibacillus casei (strain BL23) (Lactobacillus casei).